The sequence spans 301 residues: UBX domain-containing protein 2 (301 aa).

The segment at 1–61 (MSRNIRTFRD…AARGPDSEAH (61 aa)) is disordered. Residues 89 to 153 (TISLTLHLWS…KVNRHHEEYV (65 aa)) form the SEP domain. The segment at 176 to 200 (GQSSSSATTAGTSSATTDHNPDHTA) is disordered. The segment covering 178 to 192 (SSSSATTAGTSSATT) has biased composition (low complexity). The region spanning 218 to 295 (MNEPTTNIQI…NVLNSVVAVK (78 aa)) is the UBX domain.

The protein belongs to the NSFL1C family. In terms of assembly, interacts with cdc-48.1 (via N-terminus) and cdc-48.2 (via N-terminus). Interacts with kinase air-1. In terms of tissue distribution, expressed in the germline (at protein level). Expressed in spermatocytes but not in mature sperm (at protein level). Ubiquitously expressed. Predominantly expressed in the spermatheca.

It localises to the cytoplasm. It is found in the perinuclear region. The protein resides in the nucleus. The protein localises to the cytoskeleton. Its subcellular location is the microtubule organizing center. It localises to the centrosome. Ubiquitin-binding protein which acts as an adapter for ATPase cdc-48.1 and/or cdc-48.2, conferring substrate specificity. Together with ubxn-2 and ubxn-3, plays a role in hermaphrodite spermatogenesis probably by promoting the degradation of sex determination terminal factor tra-1. Probably in association with ATPase cdc-48.1 or/and cdc-48.2, regulates the centrosomal levels of kinase air-1 levels during mitotic progression by promoting air-1 removal from centrosomes in prophase. Also, regulates spindle orientation in the one-cell embryo by controlling centration and rotation of the pronuclei-centrosome complex in prophase. In Caenorhabditis elegans, this protein is UBX domain-containing protein 2.